The following is a 237-amino-acid chain: Probable transcriptional regulatory protein Mfl546 (237 aa).

The disordered stretch occupies residues 1-20 (MGRAHEVRAASMAKTAAKKS). Positions 9–20 (AASMAKTAAKKS) are enriched in low complexity.

It belongs to the TACO1 family.

The protein localises to the cytoplasm. This chain is Probable transcriptional regulatory protein Mfl546, found in Mesoplasma florum (strain ATCC 33453 / NBRC 100688 / NCTC 11704 / L1) (Acholeplasma florum).